The primary structure comprises 300 residues: MAYQSQDIIRRSATNGLTPAPQARDFQEEVAKLIDVTTCIGCKACQVACSEWNDIRDTVGNNIGVYDNPNDLSAKSWTVMRFSEVEQNDKLEWLIRKDGCMHCSDPGCLKACPAEGAIIQYANGIVDFQSEQCIGCGYCIAGCPFDIPRLNPEDNRVYKCTLCVDRVVVGQEPACVKTCPTGAIHFGTKESMKTLASERVAELKTRGYDNAGLYDPAGVGGTHVMYVLHHADKPNLYHGLPENPEISETVKFWKGIWKPLAAVGFAATFAASIFHYVGVGPNRADEEENNLHEEKDEERK.

Over 1–260 (MAYQSQDIIR…KFWKGIWKPL (260 aa)) the chain is Cytoplasmic. 4Fe-4S ferredoxin-type domains follow at residues 30–60 (VAKL…DTVG), 91–123 (LEWL…QYAN), 124–153 (GIVD…LNPE), and 158–189 (YKCT…FGTK). [4Fe-4S] cluster contacts are provided by Cys39, Cys42, Cys45, Cys49, Cys100, Cys103, Cys108, Cys112, Cys133, Cys136, Cys139, Cys143, Cys160, Cys163, Cys175, and Cys179. The chain crosses the membrane as a helical span at residues 261 to 279 (AAVGFAATFAASIFHYVGV). Topologically, residues 280 to 300 (GPNRADEEENNLHEEKDEERK) are periplasmic.

In terms of assembly, formate dehydrogenase is a membrane-bound complex, formed by subunits alpha, beta and gamma. [4Fe-4S] cluster is required as a cofactor.

It is found in the cell membrane. Allows to use formate as major electron donor during aerobic respiration. The beta chain is an electron transfer unit containing 4 cysteine clusters involved in the formation of iron-sulfur centers. Electrons are transferred from the gamma chain to the molybdenum cofactor of the alpha subunit. The protein is Formate dehydrogenase-O iron-sulfur subunit (fdoH) of Escherichia coli (strain K12).